Here is a 296-residue protein sequence, read N- to C-terminus: tRNA dimethylallyltransferase (296 aa).

Residue 11–18 (GPTAVGKT) participates in ATP binding. 13 to 18 (TAVGKT) is a substrate binding site. Residues 36–39 (DSQQ) are interaction with substrate tRNA.

Belongs to the IPP transferase family. In terms of assembly, monomer. Mg(2+) is required as a cofactor.

The catalysed reaction is adenosine(37) in tRNA + dimethylallyl diphosphate = N(6)-dimethylallyladenosine(37) in tRNA + diphosphate. Catalyzes the transfer of a dimethylallyl group onto the adenine at position 37 in tRNAs that read codons beginning with uridine, leading to the formation of N6-(dimethylallyl)adenosine (i(6)A). In Streptococcus equi subsp. zooepidemicus (strain H70), this protein is tRNA dimethylallyltransferase.